A 580-amino-acid polypeptide reads, in one-letter code: Transcription factor coe2-B (580 aa).

Residues 60-63 (RKSN) are interaction with DNA. The C5-type zinc finger occupies 148–167 (CRVLLTHEVMCSRCCEKKSC). Interaction with DNA stretches follow at residues 194 to 201 (NCLKTAGN) and 233 to 236 (NNSK). The IPT/TIG domain maps to 259 to 341 (PCIKAISPSE…CKGAPGRFIY (83 aa)). The disordered stretch occupies residues 455-492 (IRNTSSISPRGYSSSSTPQQSNYSTPSNSMNGYSNVPM). Over residues 459 to 481 (SSISPRGYSSSSTPQQSNYSTPS) the composition is skewed to low complexity. Residues 482 to 492 (NSMNGYSNVPM) show a composition bias toward polar residues.

The protein belongs to the COE family. In embryos, expressed in precursors of primary neurons. In adults, expressed at high levels in the brain, and at low levels in the somatic muscles, testis, and possibly the spleen.

Its subcellular location is the nucleus. Its function is as follows. May play a pivotal role in the transcriptional cascade that specifies primary neurons in embryos. Stabilizes the higher neural potential of selected progenitor cells that express neurog2/X-ngnr-1 by maintaining Delta-Notch signaling. Thus ensures the transition between neural competence and irreversible commitment to a neural fate. Also promotes neuronal differentiation by activating neurod1 expression, directly or indirectly. This is Transcription factor coe2-B from Xenopus laevis (African clawed frog).